A 71-amino-acid polypeptide reads, in one-letter code: MTELAIGIAAGLAAIGGAIGVAIIVKAVIEGTARQPEQRGTLQTLMFIGAPLAEAVPIIAIVIAFLLFFMG.

A run of 2 helical transmembrane segments spans residues 5–25 and 47–67; these read AIGI…AIIV and FIGA…AFLL.

The protein belongs to the ATPase C chain family. In terms of assembly, F-type ATPases have 2 components, F(1) - the catalytic core - and F(0) - the membrane proton channel. F(1) has five subunits: alpha(3), beta(3), gamma(1), delta(1), epsilon(1). F(0) has three main subunits: a(1), b(2) and c(10-14). The alpha and beta chains form an alternating ring which encloses part of the gamma chain. F(1) is attached to F(0) by a central stalk formed by the gamma and epsilon chains, while a peripheral stalk is formed by the delta and b chains.

Its subcellular location is the cell membrane. F(1)F(0) ATP synthase produces ATP from ADP in the presence of a proton or sodium gradient. F-type ATPases consist of two structural domains, F(1) containing the extramembraneous catalytic core and F(0) containing the membrane proton channel, linked together by a central stalk and a peripheral stalk. During catalysis, ATP synthesis in the catalytic domain of F(1) is coupled via a rotary mechanism of the central stalk subunits to proton translocation. Functionally, key component of the F(0) channel; it plays a direct role in translocation across the membrane. A homomeric c-ring of between 10-14 subunits forms the central stalk rotor element with the F(1) delta and epsilon subunits. The sequence is that of ATP synthase subunit c from Shouchella clausii (strain KSM-K16) (Alkalihalobacillus clausii).